The chain runs to 130 residues: Small ribosomal subunit protein uS9 (130 aa).

The tract at residues 102-130 (GLLTRDSRMKERKKPGLKGARRAPQFSKR) is disordered. Residues 111–130 (KERKKPGLKGARRAPQFSKR) show a composition bias toward basic residues.

Belongs to the universal ribosomal protein uS9 family.

In Listeria monocytogenes serovar 1/2a (strain ATCC BAA-679 / EGD-e), this protein is Small ribosomal subunit protein uS9.